The primary structure comprises 371 residues: Putative 26S proteasome regulatory subunit homolog MJ1494 (371 aa).

161–168 contacts ATP; it reads GPPGTGKT.

It belongs to the AAA ATPase family.

In terms of biological role, the 26S proteasome is involved in the ATP-dependent degradation of ubiquitinated proteins. The regulatory (or ATPase) complex confers ATP dependency and substrate specificity to the 26S complex. This chain is Putative 26S proteasome regulatory subunit homolog MJ1494, found in Methanocaldococcus jannaschii (strain ATCC 43067 / DSM 2661 / JAL-1 / JCM 10045 / NBRC 100440) (Methanococcus jannaschii).